Reading from the N-terminus, the 118-residue chain is Beta-2-microglobulin (118 aa).

Residues 1 to 20 form the signal peptide; that stretch reads MAPLVALVLLGLLSLSGLDA. The 88-residue stretch at 25 to 112 folds into the Ig-like C1-type domain; that stretch reads PKVQVYSRHP…HVTLDKPKIV (88 aa). An intrachain disulfide couples cysteine 45 to cysteine 99.

Belongs to the beta-2-microglobulin family. In terms of assembly, heterodimer of an alpha chain and a beta chain. Beta-2-microglobulin is the beta-chain of major histocompatibility complex class I molecules.

It localises to the secreted. Component of the class I major histocompatibility complex (MHC). Involved in the presentation of peptide antigens to the immune system. This is Beta-2-microglobulin (B2M) from Sus scrofa (Pig).